A 271-amino-acid chain; its full sequence is Type II restriction enzyme ScrFI (271 aa).

The catalysed reaction is Endonucleolytic cleavage of DNA to give specific double-stranded fragments with terminal 5'-phosphates.. A P subtype restriction enzyme that recognizes the double-stranded sequence 5'-CCNGG-3' and cleaves after C-2. In Lactococcus lactis subsp. cremoris (Streptococcus cremoris), this protein is Type II restriction enzyme ScrFI.